The primary structure comprises 301 residues: Nucleotide-binding protein Noca_2527 (301 aa).

26–33 (GMTGAGRS) serves as a coordination point for ATP. 77 to 80 (DVRS) provides a ligand contact to GTP.

It belongs to the RapZ-like family.

In terms of biological role, displays ATPase and GTPase activities. This is Nucleotide-binding protein Noca_2527 from Nocardioides sp. (strain ATCC BAA-499 / JS614).